A 123-amino-acid polypeptide reads, in one-letter code: Ribosome-binding factor A (123 aa).

The protein belongs to the RbfA family. As to quaternary structure, monomer. Binds 30S ribosomal subunits, but not 50S ribosomal subunits or 70S ribosomes.

It localises to the cytoplasm. In terms of biological role, one of several proteins that assist in the late maturation steps of the functional core of the 30S ribosomal subunit. Associates with free 30S ribosomal subunits (but not with 30S subunits that are part of 70S ribosomes or polysomes). Required for efficient processing of 16S rRNA. May interact with the 5'-terminal helix region of 16S rRNA. The polypeptide is Ribosome-binding factor A (Delftia acidovorans (strain DSM 14801 / SPH-1)).